A 286-amino-acid chain; its full sequence is 4-hydroxybenzoate octaprenyltransferase (286 aa).

7 helical membrane-spanning segments follow: residues Gly21–Met40, Leu96–Val116, Phe142–Val162, Trp167–Val187, Gln210–Ala230, Leu235–Phe255, and Phe266–Phe286.

Belongs to the UbiA prenyltransferase family. It depends on Mg(2+) as a cofactor.

Its subcellular location is the cell inner membrane. It catalyses the reaction all-trans-octaprenyl diphosphate + 4-hydroxybenzoate = 4-hydroxy-3-(all-trans-octaprenyl)benzoate + diphosphate. Its pathway is cofactor biosynthesis; ubiquinone biosynthesis. Its function is as follows. Catalyzes the prenylation of para-hydroxybenzoate (PHB) with an all-trans polyprenyl group. Mediates the second step in the final reaction sequence of ubiquinone-8 (UQ-8) biosynthesis, which is the condensation of the polyisoprenoid side chain with PHB, generating the first membrane-bound Q intermediate 3-octaprenyl-4-hydroxybenzoate. The chain is 4-hydroxybenzoate octaprenyltransferase from Shewanella sp. (strain MR-4).